The sequence spans 850 residues: Endoribonuclease ysh-1 (850 aa).

6 residues coordinate Zn(2+): H83, H85, D87, H88, H173, and D194. The active-site Proton donor is the H442. Zn(2+) is bound at residue H464. 2 disordered regions span residues 685 to 708 (VKRSATKNPHTHSPLPADKNPHSH) and 732 to 784 (SPIV…EQQL). Positions 744–754 (PTTKAITSPSE) are enriched in polar residues. Positions 755 to 766 (ETAKSSDVKSDA) are enriched in basic and acidic residues. Acidic residues predominate over residues 767 to 781 (DADASMDVSEEDEDE).

Belongs to the metallo-beta-lactamase superfamily. RNA-metabolizing metallo-beta-lactamase-like family. CPSF2/YSH1 subfamily.

Its subcellular location is the nucleus. Component of the cleavage factor I (CF I) involved in pre-mRNA 3'-end processing. In Neurospora crassa (strain ATCC 24698 / 74-OR23-1A / CBS 708.71 / DSM 1257 / FGSC 987), this protein is Endoribonuclease ysh-1 (ysh-1).